Reading from the N-terminus, the 349-residue chain is Transcription repressor OFP5 (349 aa).

3 disordered regions span residues 1 to 20 (MMRW…GLSR), 29 to 94 (KLSG…KESN), and 143 to 183 (KQRC…GYSR). Over residues 10–20 (VSSSSSSGLSR) the composition is skewed to low complexity. A compositionally biased stretch (basic and acidic residues) spans 37–48 (KPAKEKKQDEKA). Residues 49-62 (SQNISVKTSLSSTT) show a composition bias toward polar residues. Composition is skewed to basic and acidic residues over residues 63-94 (RRSD…KESN) and 143-167 (KQRC…DAGV). The 60-residue stretch at 286–345 (VVKCSSDPQKDFRDSMIEMIMENGINHPEELKELLVCYLRLNTDEYHDMIISVFQQVHND) folds into the OVATE domain.

Interacts with BLH1, BLH2, BLH3, BLH4, BLH6 and BLH10. As to expression, expressed in roots, rosette and cauline leaves, and flower buds.

The protein localises to the nucleus. Transcriptional repressor that regulates multiple aspects of plant growth and development through the regulation of BEL1-LIKE (BLH) and KNOX TALE (KNAT) homeodomain transcription factors. Required for embryo development. This Arabidopsis thaliana (Mouse-ear cress) protein is Transcription repressor OFP5 (OFP5).